Reading from the N-terminus, the 152-residue chain is Transcriptional regulator MraZ (152 aa).

2 consecutive SpoVT-AbrB domains span residues 7–54 (INSI…TMDE) and 83–126 (ASEM…SQEA).

The protein belongs to the MraZ family. As to quaternary structure, forms oligomers.

It is found in the cytoplasm. The protein localises to the nucleoid. This Hydrogenovibrio crunogenus (strain DSM 25203 / XCL-2) (Thiomicrospira crunogena) protein is Transcriptional regulator MraZ.